The chain runs to 65 residues: Small ribosomal subunit protein eS27 (65 aa).

Positions 20, 23, 39, and 42 each coordinate Zn(2+). A C4-type zinc finger spans residues 20 to 42 (CIDCGNEQIVFSHPATPVRCLVC).

Belongs to the eukaryotic ribosomal protein eS27 family. Part of the 30S ribosomal subunit. The cofactor is Zn(2+).

In Thermococcus kodakarensis (strain ATCC BAA-918 / JCM 12380 / KOD1) (Pyrococcus kodakaraensis (strain KOD1)), this protein is Small ribosomal subunit protein eS27.